Reading from the N-terminus, the 448-residue chain is Protein king tubby (448 aa).

Residues 103-195 (HELEDEESSP…NGTGGESEGD (93 aa)) are disordered. The segment covering 118 to 133 (QHQQSASHSANSTQSQ) has biased composition (low complexity). Ser-141 bears the Phosphoserine mark. Residues 182–191 (NGTGNGTGGE) are compositionally biased toward gly residues.

It belongs to the TUB family.

Its subcellular location is the cytoplasm. The protein localises to the nucleus. It localises to the cell projection. It is found in the cilium membrane. The protein resides in the rhabdomere. The chain is Protein king tubby from Drosophila erecta (Fruit fly).